A 178-amino-acid chain; its full sequence is Nicotinamide-nucleotide adenylyltransferase (178 aa).

Belongs to the archaeal NMN adenylyltransferase family.

It localises to the cytoplasm. It carries out the reaction beta-nicotinamide D-ribonucleotide + ATP + H(+) = diphosphate + NAD(+). It functions in the pathway cofactor biosynthesis; NAD(+) biosynthesis; NAD(+) from nicotinamide D-ribonucleotide: step 1/1. This is Nicotinamide-nucleotide adenylyltransferase from Caldivirga maquilingensis (strain ATCC 700844 / DSM 13496 / JCM 10307 / IC-167).